The chain runs to 288 residues: Probable coatomer subunit epsilon (288 aa).

The residue at position 262 (S262) is a Phosphoserine.

It belongs to the COPE family. In terms of assembly, oligomeric complex that consists of at least the alpha, beta, beta', gamma, delta, epsilon and zeta subunits.

It localises to the cytoplasm. The protein localises to the golgi apparatus membrane. The protein resides in the cytoplasmic vesicle. It is found in the COPI-coated vesicle membrane. The coatomer is a cytosolic protein complex that binds to dilysine motifs and reversibly associates with Golgi non-clathrin-coated vesicles, which further mediate biosynthetic protein transport from the ER, via the Golgi up to the trans Golgi network. The coatomer complex is required for budding from Golgi membranes, and is essential for the retrograde Golgi-to-ER transport of dilysine-tagged proteins. This is Probable coatomer subunit epsilon (sec28) from Schizosaccharomyces pombe (strain 972 / ATCC 24843) (Fission yeast).